A 370-amino-acid polypeptide reads, in one-letter code: Coiled-coil domain-containing protein 89 (370 aa).

A disordered region spans residues 1–38; sequence MPQEESAPRMDTPSSEEPLDKQNRKLEDQEEEMGFKEL. A Phosphothreonine modification is found at T12. Basic and acidic residues predominate over residues 18–38; that stretch reads PLDKQNRKLEDQEEEMGFKEL. Positions 19 to 346 form a coiled coil; the sequence is LDKQNRKLED…YDELRLQSEA (328 aa).

Belongs to the CCDC89 family. As to quaternary structure, interacts with HEY1.

The protein localises to the cytoplasm. Its subcellular location is the nucleus. In Bos taurus (Bovine), this protein is Coiled-coil domain-containing protein 89.